The primary structure comprises 79 residues: Small ribosomal subunit protein bS18 (79 aa).

The protein belongs to the bacterial ribosomal protein bS18 family. As to quaternary structure, part of the 30S ribosomal subunit. Forms a tight heterodimer with protein bS6.

In terms of biological role, binds as a heterodimer with protein bS6 to the central domain of the 16S rRNA, where it helps stabilize the platform of the 30S subunit. The polypeptide is Small ribosomal subunit protein bS18 (Streptococcus pyogenes serotype M5 (strain Manfredo)).